The following is a 251-amino-acid chain: Octanoyltransferase (251 aa).

The region spanning 56–241 (ADTGDEIWVV…NLDGASAAAD (186 aa)) is the BPL/LPL catalytic domain. Substrate contacts are provided by residues 96–103 (RGGQITYH), 168–170 (ALG), and 181–183 (GLS). Catalysis depends on Cys199, which acts as the Acyl-thioester intermediate.

This sequence belongs to the LipB family.

It localises to the cytoplasm. The catalysed reaction is octanoyl-[ACP] + L-lysyl-[protein] = N(6)-octanoyl-L-lysyl-[protein] + holo-[ACP] + H(+). It functions in the pathway protein modification; protein lipoylation via endogenous pathway; protein N(6)-(lipoyl)lysine from octanoyl-[acyl-carrier-protein]: step 1/2. Its function is as follows. Catalyzes the transfer of endogenously produced octanoic acid from octanoyl-acyl-carrier-protein onto the lipoyl domains of lipoate-dependent enzymes. Lipoyl-ACP can also act as a substrate although octanoyl-ACP is likely to be the physiological substrate. This is Octanoyltransferase from Burkholderia orbicola (strain AU 1054).